A 467-amino-acid polypeptide reads, in one-letter code: Calcium-binding protein P (467 aa).

Composition is skewed to pro residues over residues 1-10 and 45-62; these read MQNPQNPPPA and QYPP…PPYP. Residues 1–311 form a disordered region; sequence MQNPQNPPPA…GAYPGQPPMG (311 aa). The XYPPX signature appears at 45-49; that stretch reads QYPPQ. Residues 63-74 show a composition bias toward low complexity; sequence GTQQPGAPGAPG. 17 consecutive short sequence motifs (XYPPX) follow at residues 75 to 79, 83 to 87, 94 to 98, 104 to 108, 115 to 119, 125 to 129, 136 to 140, 146 to 150, 157 to 161, 165 to 169, 176 to 180, 187 to 191, 221 to 225, 238 to 242, 247 to 251, 256 to 260, and 275 to 279; these read QYPPQ, GYPPQ, AYPPQ, and GVPPQ. Composition is skewed to pro residues over residues 75 to 109 and 118 to 131; these read QYPP…PPQQ and PQQP…PQQP. Over residues 132–145 the composition is skewed to low complexity; it reads GAPGQYPPQQGQPG. Composition is skewed to low complexity over residues 153–193 and 215–246; these read GQPG…PQQG and AYPG…GQPG. Residues 253–311 show a composition bias toward low complexity; that stretch reads QPGAYPPQQQQVAYPGQQPPMGAYPPQQGAYPGQQGAYPGQQGAYPGQQGAYPGQPPMG. EF-hand domains lie at 399 to 434 and 435 to 467; these read QKMM…LGYY and FSKG…WSMQ. Ca(2+) is bound by residues Asp412, Asn414, Ser416, Thr418, and Glu423.

This is Calcium-binding protein P (cbpP) from Dictyostelium discoideum (Social amoeba).